Consider the following 4171-residue polypeptide: Cytoplasmic dynein 2 heavy chain 1 (4171 aa).

Residues 1–1598 (MSSDSKDQRK…VLRQVSSEFE (1598 aa)) are stem. 115–122 (GKELTEGN) contributes to the ATP binding site. Coiled coils occupy residues 164–203 (ANDY…CDEL), 629–693 (KQLE…KEEE), 829–861 (DLEE…AERL), 927–1048 (EIAE…KEKR), and 1354–1383 (SRQS…LEQK). AAA regions lie at residues 1599–1823 (YTYE…VLGG), 1883–2100 (EPLG…VRSH), 2184–2432 (VTKE…WVVS), and 2527–2767 (RFAF…PIKY). ATP contacts are provided by residues 1637–1644 (GPAGTGKT), 1921–1928 (GAAGSGKS), 2226–2233 (GTTGCGKQ), and 2565–2572 (GRPGFGRR). The interval 2776 to 3064 (QLLGYKRLTL…VDLDREQDTI (289 aa)) is stalk. 3 coiled-coil regions span residues 2790–2877 (ERLK…KEVQ), 2999–3059 (EKIA…DLDR), and 3308–3336 (ELEE…LLLQ). 2 AAA regions span residues 3140-3367 (ASLE…IITK) and 3575-3784 (LMDF…FVEQ).

It belongs to the dynein heavy chain family. The cytoplasmic dynein complex 2 is probably composed by a heavy chain che-3 homodimer and a number of light intermediate chains.

The protein resides in the cell projection. It is found in the cilium membrane. It localises to the cytoplasm. The protein localises to the cytoskeleton. Its function is as follows. Functions as a motor for intraflagellar retrograde transport in chemosensory neurons. Functions in cilia biogenesis. The sequence is that of Cytoplasmic dynein 2 heavy chain 1 from Caenorhabditis elegans.